We begin with the raw amino-acid sequence, 74 residues long: LLMTGVESGRDAYIAKNYNCVYHCFRDDYCNGLCTENGADSGYCYLAGKYGNACWCINLPDDKPIRIPGKCHRR.

The signal sequence occupies residues 1-8 (LLMTGVES). Residues 10–72 (RDAYIAKNYN…KPIRIPGKCH (63 aa)) enclose the LCN-type CS-alpha/beta domain. 4 disulfide bridges follow: Cys20-Cys71, Cys24-Cys44, Cys30-Cys54, and Cys34-Cys56. The propeptide at 73 to 74 (RR) is removed by a carboxypeptidase.

The protein belongs to the long (4 C-C) scorpion toxin superfamily. Sodium channel inhibitor family. Alpha subfamily. As to expression, expressed by the venom gland.

The protein resides in the secreted. Alpha toxins bind voltage-independently at site-3 of sodium channels (Nav) and inhibit the inactivation of the activated channels, thereby blocking neuronal transmission. In Olivierus martensii (Manchurian scorpion), this protein is Toxin BmKaTx17.